A 264-amino-acid polypeptide reads, in one-letter code: Phosphonoacetaldehyde hydrolase (264 aa).

Residue Asp-9 is the Nucleophile of the active site. Asp-9 and Ala-11 together coordinate Mg(2+). Residue Lys-50 is the Schiff-base intermediate with substrate of the active site. Asp-183 contacts Mg(2+).

This sequence belongs to the HAD-like hydrolase superfamily. PhnX family. As to quaternary structure, homodimer. Requires Mg(2+) as cofactor.

It carries out the reaction phosphonoacetaldehyde + H2O = acetaldehyde + phosphate + H(+). Involved in phosphonate degradation. This is Phosphonoacetaldehyde hydrolase from Bacillus cereus (strain G9842).